Here is a 241-residue protein sequence, read N- to C-terminus: Triosephosphate isomerase (241 aa).

Position 9–11 (Asn-9–Lys-11) interacts with substrate. Catalysis depends on His-96, which acts as the Electrophile. The active-site Proton acceptor is the Glu-165. Residues Gly-171, Ser-204, and Gly-225–Gly-226 each bind substrate.

Belongs to the triosephosphate isomerase family. Homodimer.

It is found in the cytoplasm. It carries out the reaction D-glyceraldehyde 3-phosphate = dihydroxyacetone phosphate. It participates in carbohydrate biosynthesis; gluconeogenesis. It functions in the pathway carbohydrate degradation; glycolysis; D-glyceraldehyde 3-phosphate from glycerone phosphate: step 1/1. Its function is as follows. Involved in the gluconeogenesis. Catalyzes stereospecifically the conversion of dihydroxyacetone phosphate (DHAP) to D-glyceraldehyde-3-phosphate (G3P). The chain is Triosephosphate isomerase from Trichodesmium erythraeum (strain IMS101).